Here is a 271-residue protein sequence, read N- to C-terminus: Bis(5'-nucleosyl)-tetraphosphatase, symmetrical (271 aa).

This sequence belongs to the Ap4A hydrolase family.

The catalysed reaction is P(1),P(4)-bis(5'-adenosyl) tetraphosphate + H2O = 2 ADP + 2 H(+). Functionally, hydrolyzes diadenosine 5',5'''-P1,P4-tetraphosphate to yield ADP. In Aliivibrio fischeri (strain ATCC 700601 / ES114) (Vibrio fischeri), this protein is Bis(5'-nucleosyl)-tetraphosphatase, symmetrical.